The chain runs to 204 residues: Elongation factor Ts (204 aa).

The segment at 87 to 90 (TDFV) is involved in Mg(2+) ion dislocation from EF-Tu.

Belongs to the EF-Ts family.

It localises to the cytoplasm. Functionally, associates with the EF-Tu.GDP complex and induces the exchange of GDP to GTP. It remains bound to the aminoacyl-tRNA.EF-Tu.GTP complex up to the GTP hydrolysis stage on the ribosome. This is Elongation factor Ts from Frankia casuarinae (strain DSM 45818 / CECT 9043 / HFP020203 / CcI3).